The following is a 212-amino-acid chain: Small ribosomal subunit protein uS5 (212 aa).

Positions 48–111 constitute an S5 DRBM domain; it reads LEDEVLDINM…DIAKLNIIDV (64 aa).

Belongs to the universal ribosomal protein uS5 family. As to quaternary structure, part of the 30S ribosomal subunit. Contacts protein S4.

With S4 and S12 plays an important role in translational accuracy. The polypeptide is Small ribosomal subunit protein uS5 (Haloarcula marismortui (strain ATCC 43049 / DSM 3752 / JCM 8966 / VKM B-1809) (Halobacterium marismortui)).